The chain runs to 293 residues: 1D-myo-inositol 2-acetamido-2-deoxy-alpha-D-glucopyranoside deacetylase (293 aa).

H15, D18, and H148 together coordinate Zn(2+).

It belongs to the MshB deacetylase family. The cofactor is Zn(2+).

It carries out the reaction 1D-myo-inositol 2-acetamido-2-deoxy-alpha-D-glucopyranoside + H2O = 1D-myo-inositol 2-amino-2-deoxy-alpha-D-glucopyranoside + acetate. In terms of biological role, catalyzes the deacetylation of 1D-myo-inositol 2-acetamido-2-deoxy-alpha-D-glucopyranoside (GlcNAc-Ins) in the mycothiol biosynthesis pathway. The polypeptide is 1D-myo-inositol 2-acetamido-2-deoxy-alpha-D-glucopyranoside deacetylase (Corynebacterium diphtheriae (strain ATCC 700971 / NCTC 13129 / Biotype gravis)).